Consider the following 352-residue polypeptide: DNA polymerase IV (352 aa).

Residues 6–186 (IIHIDMDAFY…LPLGKIPGVG (181 aa)) enclose the UmuC domain. Mg(2+) contacts are provided by Asp-10 and Asp-104. Residue Glu-105 is part of the active site.

It belongs to the DNA polymerase type-Y family. As to quaternary structure, monomer. The cofactor is Mg(2+).

It localises to the cytoplasm. It carries out the reaction DNA(n) + a 2'-deoxyribonucleoside 5'-triphosphate = DNA(n+1) + diphosphate. Functionally, poorly processive, error-prone DNA polymerase involved in untargeted mutagenesis. Copies undamaged DNA at stalled replication forks, which arise in vivo from mismatched or misaligned primer ends. These misaligned primers can be extended by PolIV. Exhibits no 3'-5' exonuclease (proofreading) activity. May be involved in translesional synthesis, in conjunction with the beta clamp from PolIII. The protein is DNA polymerase IV of Neisseria meningitidis serogroup A / serotype 4A (strain DSM 15465 / Z2491).